Here is a 538-residue protein sequence, read N- to C-terminus: MTRECAPPTPGSGAPLSGSVLAEAAVVFVVVLSIHAAVWDRYSWCAVALAVQAFYVQYKWDRLLQQGSAVFQFRMSANSGLLPASVVMPLLGLVMKERCQAAGNPYFERFGIVVAATGMAVALFSSVLALGITRPVPTNTCVISGLAGGVIIYIMKHSLSVGEVIEVLEALLIFVYLNMILLYLLPRCFTPGEALLVLGGISFMLNQLIKRSLTVVESQGDPLDFFLLVVVVGMVLMGIFFSTLFVFMDSGTWASSIFFHLMTCVLGLGVVLPWLHRLIRRNPLLWLFQFLFQTETRVYLLAYWCLLATVACLVVLYQNAKRSSSESKKHQAPTITRKYFHFIVVATYIPGIILDRPLLYVAATVCLAVFIFLEYVRYFRIKPLGHTLRSLLSLFLDERDSGPLILTHIYLLLGMSLPIWLVPRPCTQKGSLGGARALVPYAGVLAVGVGDTVASIFGSTMGEIRWPGTKKTFEGTMTSIFAQIISVALILIFDSGVDLNYSYAWILGSISTVSLLEAYTTQIDNLLLPLYLLILLMA.

The Lumenal segment spans residues 1-18 (MTRECAPPTPGSGAPLSG). The chain crosses the membrane as a helical span at residues 19–39 (SVLAEAAVVFVVVLSIHAAVW). The Cytoplasmic segment spans residues 40–74 (DRYSWCAVALAVQAFYVQYKWDRLLQQGSAVFQFR). A helical transmembrane segment spans residues 75 to 95 (MSANSGLLPASVVMPLLGLVM). Residues 96 to 111 (KERCQAAGNPYFERFG) are Lumenal-facing. The chain crosses the membrane as a helical span at residues 112–132 (IVVAATGMAVALFSSVLALGI). At 133–134 (TR) the chain is on the cytoplasmic side. A helical membrane pass occupies residues 135–155 (PVPTNTCVISGLAGGVIIYIM). The Lumenal portion of the chain corresponds to 156–163 (KHSLSVGE). A helical transmembrane segment spans residues 164–184 (VIEVLEALLIFVYLNMILLYL). The Cytoplasmic segment spans residues 185–188 (LPRC). A helical transmembrane segment spans residues 189 to 209 (FTPGEALLVLGGISFMLNQLI). At 210–224 (KRSLTVVESQGDPLD) the chain is on the lumenal side. A helical transmembrane segment spans residues 225-245 (FFLLVVVVGMVLMGIFFSTLF). Residues 246–254 (VFMDSGTWA) are Cytoplasmic-facing. The chain crosses the membrane as a helical span at residues 255-275 (SSIFFHLMTCVLGLGVVLPWL). Over 276 to 297 (HRLIRRNPLLWLFQFLFQTETR) the chain is Lumenal. Residues 298–318 (VYLLAYWCLLATVACLVVLYQ) form a helical membrane-spanning segment. The Cytoplasmic segment spans residues 319-337 (NAKRSSSESKKHQAPTITR). A helical transmembrane segment spans residues 338 to 354 (KYFHFIVVATYIPGIIL). Over 355–359 (DRPLL) the chain is Lumenal. A helical membrane pass occupies residues 360-380 (YVAATVCLAVFIFLEYVRYFR). Over 381-401 (IKPLGHTLRSLLSLFLDERDS) the chain is Cytoplasmic. The helical transmembrane segment at 402 to 422 (GPLILTHIYLLLGMSLPIWLV) threads the bilayer. The Lumenal segment spans residues 423–436 (PRPCTQKGSLGGAR). Residues 437–457 (ALVPYAGVLAVGVGDTVASIF) traverse the membrane as a helical segment. Topologically, residues 458-472 (GSTMGEIRWPGTKKT) are cytoplasmic. The CTP-binding stretch occupies residues 459–474 (STMGEIRWPGTKKTFE). The helical transmembrane segment at 473 to 493 (FEGTMTSIFAQIISVALILIF) threads the bilayer. Topologically, residues 494-495 (DS) are lumenal. Residues 496–516 (GVDLNYSYAWILGSISTVSLL) traverse the membrane as a helical segment. The Cytoplasmic portion of the chain corresponds to 517-538 (EAYTTQIDNLLLPLYLLILLMA).

This sequence belongs to the polyprenol kinase family.

Its subcellular location is the endoplasmic reticulum membrane. The enzyme catalyses a di-trans,poly-cis-dolichol + CTP = a di-trans,poly-cis-dolichyl phosphate + CDP + H(+). Its pathway is protein modification; protein glycosylation. Functionally, catalyzes CTP-mediated phosphorylation of dolichol, the terminal step in de novo dolichyl monophosphate (Dol-P) biosynthesis. Dol-P is a lipid carrier essential for the synthesis of N-linked and O-linked oligosaccharides and for GPI anchors. The polypeptide is Dolichol kinase (DOLK) (Bos taurus (Bovine)).